Here is a 271-residue protein sequence, read N- to C-terminus: ATP synthase subunit a (271 aa).

Helical transmembrane passes span 40 to 60 (TINI…LVLF), 100 to 120 (LIAP…LMDL), 146 to 166 (DVNV…FYSI), 220 to 240 (LIFI…LNVP), and 242 to 262 (AIFH…LTIV).

This sequence belongs to the ATPase A chain family. F-type ATPases have 2 components, CF(1) - the catalytic core - and CF(0) - the membrane proton channel. CF(1) has five subunits: alpha(3), beta(3), gamma(1), delta(1), epsilon(1). CF(0) has three main subunits: a(1), b(2) and c(9-12). The alpha and beta chains form an alternating ring which encloses part of the gamma chain. CF(1) is attached to CF(0) by a central stalk formed by the gamma and epsilon chains, while a peripheral stalk is formed by the delta and b chains.

It localises to the cell inner membrane. In terms of biological role, key component of the proton channel; it plays a direct role in the translocation of protons across the membrane. This is ATP synthase subunit a from Escherichia coli O8 (strain IAI1).